A 346-amino-acid polypeptide reads, in one-letter code: Protein SHI RELATED SEQUENCE 5 (346 aa).

Positions 7–31 are disordered; sequence LGGRDNNSNNNKQDHHQVDKDHHHQ. Over residues 18 to 31 the composition is skewed to basic and acidic residues; the sequence is KQDHHQVDKDHHHQ. Zn(2+) contacts are provided by C125, C128, C136, C141, C145, and C152. Positions 125–152 form a DNA-binding region, zn(2)-C6 fungal-type; degenerate; it reads CQDCGNQAKKDCPHMRCRTCCKSRGFHC. Over residues 175–186 the composition is skewed to polar residues; sequence SLQHHSASSRET. Residues 175–215 are disordered; sequence SLQHHSASSRETQNAKRLREASGGDNNDDKDHSGGGGSALA. Residues 187–207 show a composition bias toward basic and acidic residues; that stretch reads QNAKRLREASGGDNNDDKDHS. Residues 269-272 carry the Required for homo- and heterodimerization motif; it reads IGGH.

It belongs to the SHI protein family.

Its subcellular location is the nucleus. Transcription activator that binds DNA on 5'-ACTCTAC-3' and promotes auxin homeostasis-regulating gene expression (e.g. YUC genes), as well as genes affecting stamen development, cell expansion and timing of flowering. Synergistically with other SHI-related proteins, regulates gynoecium, stamen and leaf development in a dose-dependent manner, controlling apical-basal patterning. Promotes style and stigma formation, and influences vascular development during gynoecium development. May also have a role in the formation and/or maintenance of the shoot apical meristem (SAM). The polypeptide is Protein SHI RELATED SEQUENCE 5 (SRS5) (Arabidopsis thaliana (Mouse-ear cress)).